We begin with the raw amino-acid sequence, 209 residues long: LexA repressor (209 aa).

The H-T-H motif DNA-binding region spans 28-48 (RAEIAKELGFRSANAAEEHLK). Catalysis depends on for autocatalytic cleavage activity residues Ser-126 and Lys-163.

This sequence belongs to the peptidase S24 family. As to quaternary structure, homodimer.

The enzyme catalyses Hydrolysis of Ala-|-Gly bond in repressor LexA.. In terms of biological role, represses a number of genes involved in the response to DNA damage (SOS response), including recA and lexA. In the presence of single-stranded DNA, RecA interacts with LexA causing an autocatalytic cleavage which disrupts the DNA-binding part of LexA, leading to derepression of the SOS regulon and eventually DNA repair. This is LexA repressor from Vibrio cholerae serotype O1 (strain ATCC 39541 / Classical Ogawa 395 / O395).